We begin with the raw amino-acid sequence, 182 residues long: Helofensin-3 (182 aa).

The first 26 residues, 1–26, serve as a signal peptide directing secretion; the sequence is MQMDWLFIAVISGIGLLSSGVPGTQG. The C(6)C(4)C(9)C(6)CC 1; approximate repeat unit spans residues 27–64; that stretch reads AYTTEQCRALNGSCNFYACFPKNVIIGKCDWWGWSCCA. A C(6)C(4)C(9)C(6)CC 2; approximate repeat occupies 65-101; it reads RTPLERCTAKKGTCTKTGCTKTDTDHGPCDGGAQCCQ. The C(6)C(4)C(9)C(6)CC 3; approximate repeat unit spans residues 102-138; it reads RDPVKYCKFHGNVCGRGKCPMDHIPIGECTPGYPCCK. Residues 139–176 form a C(6)C(4)C(9)C(6)CC 4; approximate repeat; that stretch reads RDGPAYCKSKGGKCLNRCPQIVPTNVIGVCATGVPCCK.

It belongs to the beta-defensin family. Helofensin subfamily. Expressed by the mandibular venom gland.

The protein localises to the secreted. In terms of biological role, lethal toxin which possesses an inhibitory effect on direct electrical stimulation of the isolated hemi-diaphragm of mice. Neither hemorrhagic nor hemolytic activities are detected. Phospholipase A2 activity, proteolytic activity and arginine esterolytic activity are absent. The sequence is that of Helofensin-3 from Heloderma suspectum cinctum (Banded Gila monster).